The following is a 118-amino-acid chain: MAEQVTSAQATAKTVRIAARKVRLVIDLIRGKSVAEALAILQFTPRGASPVVAKVLNSAVANAENNFDLDRQDLVVSEAYVNEGPTLKRFRPRAKGSASPINKRTSHITVVVSEKEEG.

This sequence belongs to the universal ribosomal protein uL22 family. Part of the 50S ribosomal subunit.

In terms of biological role, this protein binds specifically to 23S rRNA; its binding is stimulated by other ribosomal proteins, e.g. L4, L17, and L20. It is important during the early stages of 50S assembly. It makes multiple contacts with different domains of the 23S rRNA in the assembled 50S subunit and ribosome. The globular domain of the protein is located near the polypeptide exit tunnel on the outside of the subunit, while an extended beta-hairpin is found that lines the wall of the exit tunnel in the center of the 70S ribosome. The protein is Large ribosomal subunit protein uL22 of Levilactobacillus brevis (strain ATCC 367 / BCRC 12310 / CIP 105137 / JCM 1170 / LMG 11437 / NCIMB 947 / NCTC 947) (Lactobacillus brevis).